A 95-amino-acid chain; its full sequence is Integration host factor subunit beta (95 aa).

Residues 52–95 form a disordered region; the sequence is SLHHRPPRVGRNPKTGESVHLPSRRVPHFKPGKELRDRVNSIKD. The span at 82–95 shows a compositional bias: basic and acidic residues; that stretch reads PGKELRDRVNSIKD.

Belongs to the bacterial histone-like protein family. Heterodimer of an alpha and a beta chain.

In terms of biological role, this protein is one of the two subunits of integration host factor, a specific DNA-binding protein that functions in genetic recombination as well as in transcriptional and translational control. The sequence is that of Integration host factor subunit beta from Methylococcus capsulatus (strain ATCC 33009 / NCIMB 11132 / Bath).